The primary structure comprises 429 residues: Histidine--tRNA ligase (429 aa).

Belongs to the class-II aminoacyl-tRNA synthetase family. In terms of assembly, homodimer.

The protein localises to the cytoplasm. It carries out the reaction tRNA(His) + L-histidine + ATP = L-histidyl-tRNA(His) + AMP + diphosphate + H(+). This Escherichia fergusonii (strain ATCC 35469 / DSM 13698 / CCUG 18766 / IAM 14443 / JCM 21226 / LMG 7866 / NBRC 102419 / NCTC 12128 / CDC 0568-73) protein is Histidine--tRNA ligase.